A 235-amino-acid chain; its full sequence is Ribonuclease 3 (235 aa).

The RNase III domain maps to Pro8–Gly137. Mg(2+) is bound at residue Glu50. Asp54 is an active-site residue. Positions 123 and 126 each coordinate Mg(2+). Residue Glu126 is part of the active site. The 70-residue stretch at Asp163–Gly232 folds into the DRBM domain. A disordered region spans residues Gln211–Gly235. Over residues Ala226–Gly235 the composition is skewed to basic and acidic residues.

It belongs to the ribonuclease III family. In terms of assembly, homodimer. Requires Mg(2+) as cofactor.

The protein localises to the cytoplasm. It carries out the reaction Endonucleolytic cleavage to 5'-phosphomonoester.. Functionally, digests double-stranded RNA. Involved in the processing of primary rRNA transcript to yield the immediate precursors to the large and small rRNAs (23S and 16S). Processes some mRNAs, and tRNAs when they are encoded in the rRNA operon. Processes pre-crRNA and tracrRNA of type II CRISPR loci if present in the organism. This is Ribonuclease 3 from Heliobacterium modesticaldum (strain ATCC 51547 / Ice1).